The sequence spans 234 residues: MGQKVNPIGLRLGVNRTWESRWYAGAGEYAKLLHEDIKIRKMLKERLKNASVSKIVIERPHKKCRVTVHTARPGVVIGKKGSDIETLRKELSKMIDGEVHLNLVEVRKPEIDAALVAESIAQQLERRVAFRRAMKRSMQSAMRMGAKGCKIVCGGRLGGAEIARTEQYNEGSVPLHTLRADIDYGTCEAKTAMGIIGIKVWIYKGEIMEHDPNAQERRLQESGEQRARSGRQAA.

Residues 39 to 107 (IRKMLKERLK…EVHLNLVEVR (69 aa)) enclose the KH type-2 domain. Positions 215–227 (QERRLQESGEQRA) are enriched in basic and acidic residues. The tract at residues 215 to 234 (QERRLQESGEQRARSGRQAA) is disordered.

It belongs to the universal ribosomal protein uS3 family. Part of the 30S ribosomal subunit. Forms a tight complex with proteins S10 and S14.

Functionally, binds the lower part of the 30S subunit head. Binds mRNA in the 70S ribosome, positioning it for translation. The polypeptide is Small ribosomal subunit protein uS3 (Maricaulis maris (strain MCS10) (Caulobacter maris)).